A 473-amino-acid polypeptide reads, in one-letter code: Cell division protein FtsZ homolog 2-2, chloroplastic (473 aa).

GTP-binding positions include 124–128 (GGGSN), 213–215 (GTG), glutamate 244, and arginine 248. Position 282 is a phosphothreonine; by PGK1 (threonine 282). Aspartate 292 is a binding site for GTP. Positions 424-455 (EEGEGRPLQATQADASMGATRRPSSSFTEGSS) are disordered. Residues 445–454 (RPSSSFTEGS) show a composition bias toward polar residues.

This sequence belongs to the FtsZ family. Aggregates to form a contractile ring-like structure; contraction of the ring was accompanied by an increase in the filament turnover rate. Self-interacts and binds to FTSZ1 in heteropolymers to form two morphologically distinct types of filaments, termed type-I (smooth filaments) and -II (rough filaments), in a GTP-dependent manner. Part of a complex made of ARC3, ARC6, FTSZ1 and FTSZ2. Interacts (via C-terminus) with ARC6. Interacts with CDP1/PARC6. Binds to PGK1. Post-translationally, phosphorylation at Thr-282 is required for the formation of contractile ring at the chloroplast midpoint.

The protein localises to the plastid. It localises to the chloroplast stroma. The protein resides in the chloroplast thylakoid membrane. Its function is as follows. Exhibits GTPase activity. Component of the plastid division machinery that forms a contractile ring at the division site. Contributes to plastid division in the vegetative shoot apex, at the shoot apical meristem (SAM) where the proplastid-to-chloroplast transition takes place. The protein is Cell division protein FtsZ homolog 2-2, chloroplastic of Arabidopsis thaliana (Mouse-ear cress).